Here is a 335-residue protein sequence, read N- to C-terminus: Mycobacterial beta-ketoacyl-[acyl-carrier-protein] synthase III (335 aa).

Active-site residues include Cys122 and His258. The interval 259–263 (QANSR) is ACP-binding. Asn289 is a catalytic residue.

The protein belongs to the thiolase-like superfamily. FabH family. As to quaternary structure, homodimer.

The protein localises to the cytoplasm. It carries out the reaction malonyl-[ACP] + dodecanoyl-CoA + H(+) = 3-oxotetradecanoyl-[ACP] + CO2 + CoA. It participates in lipid metabolism; fatty acid biosynthesis. It functions in the pathway lipid metabolism; mycolic acid biosynthesis. In terms of biological role, catalyzes the condensation reaction of fatty acid synthesis by the addition to an acyl acceptor of two carbons from malonyl-ACP. Catalyzes the first condensation reaction which initiates fatty acid synthesis and may therefore play a role in governing the total rate of fatty acid production. Possesses both acetoacetyl-ACP synthase and acetyl transacylase activities. Its substrate specificity determines the biosynthesis of branched-chain and/or straight-chain of fatty acids. This chain is Mycobacterial beta-ketoacyl-[acyl-carrier-protein] synthase III, found in Mycobacterium marinum (strain ATCC BAA-535 / M).